The primary structure comprises 231 residues: MDVFVKILSDFGFTRLSSSLHVPIVVHCMPGAGKSSCIRALLKADSRFVAYTLGVPDPCNLDGLCIKAFTGSVDLKYFNILDEYARYNGDASDFFALFGDPVQSPPRNLYRAHFKAVLSKRFGSCTAQLLRELGFEVESTKEDLVSIRGLYDFDPVGTVIYYEKEIGCLLRAHSIEAYEPEEVVGKTFETVTFVTAENHIPAESRHLVYQCLTRHRSVLHLMTPDASYTST.

The 123-residue stretch at 1 to 123 (MDVFVKILSD…FKAVLSKRFG (123 aa)) folds into the (+)RNA virus helicase ATP-binding domain. The (+)RNA virus helicase C-terminal domain maps to 124 to 231 (SCTAQLLREL…MTPDASYTST (108 aa)).

This sequence belongs to the Tymovirales TGBp1 protein family. As to quaternary structure, homodimer and homooligomer. Interacts with capsid protein. Interacts with host AGO1; this interaction targets the host protein for degradation, thereby suppressing the antiviral RNA silencing.

It localises to the host cytoplasm. Transports viral genome to neighboring plant cells directly through plasmosdesmata, without any budding. The movement protein allows efficient cell to cell propagation, by bypassing the host cell wall barrier. Increases plasmodesma size exclusion limit. Acts as a suppressor of RNA-mediated gene silencing, also known as post-transcriptional gene silencing (PTGS), a mechanism of plant viral defense that limits the accumulation of viral RNAs. In Chrysanthemum morifolium (Florist's daisy), this protein is Movement and silencing protein TGBp1.